We begin with the raw amino-acid sequence, 1614 residues long: MLKCIPLWRCNRHVESVDKRHCSLQAVPEEIYRYSRSLEELLLDANQLRELPKPFFRLLNLRKLGLSDNEIQRLPPEVANFMQLVELDVSRNDIPEIPESIKFCKALEIADFSGNPLSRLPEGFTQLRSLAHLALNDVSLQALPGDVGNLANLVTLELRENLLKSLPSSLSFLVKLEQLDLGGNELEVLPDTLGALPNLRELWLDRNQLSALPPELGNLRRLVCLDVSENRLEELPAELGGLLLLTDLLLSQNLLQRLPDGIGQLKQLSILKVDQNRLCEVTEAIGDCENLSELILTENLLTALPRSLGKLTKLTNLNADRNRLEVLPPEIGGCAALSVLSLRDNRLATLPAELAHTAELHVLDVAGNRLQSLPFALTHLNLKALWLAENQAQPMLRFQTEDDAQTGEKVLTCYLLPQQPPPSLEESGLQSSPSESWSDAPPSRVSVIQFLEVPMCSDDAEGAAAEKRGLQRRATPHPSELKVMKRGVEERRGEAYSWKPESRLPSPLEEDKRLSTESGLSEDSQPSTGTASQGEPEGSLADTQGLSQQEAAPNAQEEAVEEETYEEPTVRFAEDTLLLPPAGEDGESEEGQLEAPWPLPGGRQRLIRKDTPHYKKHFKISKLPQPEAVVALLQGAQPDGEGPAGAGGWHNGPHTPWAPRAEEEDEEDEEEDEEEEEVAVAEEDKEEAVVSAPSIKGVSFDQANNLLIEPARIEEEELTLTIVRQTGGLGISIAGGKGSTPYKGDDEGIFISRVSEEGPAAQAGVRVGDKLLEVNGVALHGAEHHQAVEALRGAGTTVQMRLWRERMVEPENAVTVTPLRPEDDYSPRERRGAGLRLPLLQPEAAGPLRQRHVACLVRSEKGLGFSIAGGKGSTPYRAGDGGIFISRIAEGGAAHRAGTLQVGDRVLSINGVDMTEARHDHAVSLLTAASPTIALLLEREAGGPLPPSPLPHSPPPPVTAPSTVVTASPGESGPLRLAPSLLAATLEGPYPVEEICLPRAGGPLGLSIVGGSDHSSHPFGIQEPGVFISKVLPRGLAARSGLRVGDRILAVNGQDIREATHQEAVSALLRPCLELVLLVRRDPPPPGMRELCIQKAPGEKLGISVRGGAKGHAGNPCDPTDEGIFISKVSPTGAAGRDGRLRVGLRLLEVNQQSLLGLTHGEAVQLLRSVGDTLTVLVCDGFDTSTVAPAEVSPGVIANPFAAGVGRRNSLESVSSIDRELSPEGCGKEKEPPGPTPQWGLEAMVPPGTTGGKMAEGPHSSSCQQPPSPPSPDTLPTNVKQAYRTFAAVPGPHPLQDTPAQPPTPGPMASPEQLSFRERQKYFELEVRMPQAEGPPKRVSLVGADDLRKMQEEEARKLQQKRAQLMREAEDGALSLDLDGEAPDDEEPEEPPPWAGPAAGLSPSSPQPLGGGAPVRTAKAERRHQERLRVQSPELSTPLPDRALSPAERRALEAEKRALWRAARMKSLEQDALRAQMVLSKSQEGRSRRGPLERLAEAPSPAPTPSPTPVEDLGLQTSTSPGRLALSGRKFDYRVFAALPSSRPVCELQSPDFAEELRSLEPSPSPGLQEEDGEVAMVLLGRPSPGTVGPEEVTLCSSRRPVRPGRRGLGPVPS.

The segment at 1 to 809 (MLKCIPLWRC…MRLWRERMVE (809 aa)) is sufficient for targeting to adherens junction and to inhibit cell proliferation. 17 LRR repeats span residues 11–34 (NRHV…IYRY), 35–58 (SRSL…FFRL), 59–81 (LNLR…VANF), 83–105 (QLVE…KFCK), 107–127 (LEIA…FTQL), 128–150 (RSLA…VGNL), 151–173 (ANLV…LSFL), 174–196 (VKLE…LGAL), 197–219 (PNLR…LGNL), 221–242 (RLVC…LGGL), 243–265 (LLLT…IGQL), 267–288 (QLSI…IGDC), 289–311 (ENLS…LGKL), 312–334 (TKLT…IGGC), 336–357 (ALSV…LAHT), 359–380 (ELHV…LTHL), and 382–405 (LKAL…DDAQ). Phosphoserine is present on serine 37. Position 378 is a phosphothreonine (threonine 378). Disordered regions lie at residues 417–441 (PQQP…SDAP), 462–608 (GAAA…RLIR), and 636–692 (AQPD…VVSA). The segment covering 428-437 (GLQSSPSESW) has biased composition (polar residues). A Phosphothreonine modification is found at threonine 475. The span at 479 to 494 (SELKVMKRGVEERRGE) shows a compositional bias: basic and acidic residues. Residues 516–533 (TESGLSEDSQPSTGTASQ) are compositionally biased toward polar residues. The span at 548–557 (QQEAAPNAQE) shows a compositional bias: low complexity. The span at 662–686 (EEEDEEDEEEDEEEEEVAVAEEDKE) shows a compositional bias: acidic residues. A coiled-coil region spans residues 664–691 (EDEEDEEEDEEEEEVAVAEEDKEEAVVS). 2 positions are modified to phosphoserine: serine 699 and serine 755. The segment at 708–1219 (IEPARIEEEE…SLESVSSIDR (512 aa)) is interaction with ARHGEF7. Residues 719–806 (TLTIVRQTGG…TVQMRLWRER (88 aa)) form the PDZ 1 domain. The tract at residues 719–1184 (TLTIVRQTGG…TVLVCDGFDT (466 aa)) is required for interaction with VIM. The residue at position 817 (threonine 817) is a Phosphothreonine. A phosphoserine mark is found at serine 826, serine 866, and serine 930. The PDZ 2 domain maps to 853 to 941 (VACLVRSEKG…TIALLLEREA (89 aa)). The disordered stretch occupies residues 940-971 (EAGGPLPPSPLPHSPPPPVTAPSTVVTASPGE). Positions 944 to 959 (PLPPSPLPHSPPPPVT) are enriched in pro residues. The span at 960 to 969 (APSTVVTASP) shows a compositional bias: low complexity. 2 PDZ domains span residues 994 to 1083 (EICL…RRDP) and 1090 to 1178 (ELCI…TVLV). 8 positions are modified to phosphoserine: serine 1130, serine 1210, serine 1213, serine 1216, serine 1222, serine 1260, serine 1268, and serine 1271. The segment at 1214–1448 (VSSIDRELSP…LPDRALSPAE (235 aa)) is disordered. A compositionally biased stretch (basic and acidic residues) spans 1217–1232 (IDRELSPEGCGKEKEP). Threonine 1304 carries the post-translational modification Phosphothreonine. Phosphoserine is present on serine 1310. The span at 1315–1327 (SFRERQKYFELEV) shows a compositional bias: basic and acidic residues. Serine 1340 carries the phosphoserine modification. Positions 1341–1368 (LVGADDLRKMQEEEARKLQQKRAQLMRE) form a coiled coil. A compositionally biased stretch (basic and acidic residues) spans 1345-1357 (DDLRKMQEEEARK). The segment covering 1378-1390 (LDGEAPDDEEPEE) has biased composition (acidic residues). The span at 1396–1408 (GPAAGLSPSSPQP) shows a compositional bias: low complexity. Residues serine 1402 and serine 1405 each carry the phosphoserine modification. Positions 1418–1429 (AKAERRHQERLR) are enriched in basic and acidic residues. Phosphoserine occurs at positions 1432, 1445, and 1467. The segment at 1476 to 1524 (QMVLSKSQEGRSRRGPLERLAEAPSPAPTPSPTPVEDLGLQTSTSPGRL) is disordered. The segment covering 1483–1496 (QEGRSRRGPLERLA) has biased composition (basic and acidic residues). The residue at position 1500 (serine 1500) is a Phosphoserine. A Phosphothreonine modification is found at threonine 1504. Residues serine 1506, serine 1520, and serine 1550 each carry the phosphoserine modification. Residues 1581-1614 (GRPSPGTVGPEEVTLCSSRRPVRPGRRGLGPVPS) form a disordered region.

This sequence belongs to the LAP (LRR and PDZ) protein family. In terms of assembly, interacts with UBE3A. Interacts with PAK1 and PAK2. Interacts (via PDZ domains) with VANGL2. Interacts (via PDZ domains) with LPP and TRIP6; the interaction is direct. Interacts (via PDZ domains) with TJP2. Interacts (via PDZ domains) with APC; may mediate APC targeting to adherens junctions of epithelial cells. Interacts (via PDZ domains) with TSHR; regulates TSHR trafficking and function. Interacts with ARHGEF7 and GIT1; interacts directly with ARHGEF7. Interacts with CTNNB1. Interacts with MAPK12. Interacts (via PDZ domains 1 and 3) with MCC. Interacts with DLG5. Interacts with STK4/MST1 and LATS1 in the presence of DLG5. Interacts (via PDZ domain 3) with CRTAM (via PDZ-binding motif); the interaction promotes CRTAM and SCRIB polarization in a subset of CD4+ T-cells. Interacts with YES1, when YES1 is in a closed conformation; the interaction facilitates YES1 autophosphorylation. Interacts (via PDZ domains) with VIM; the interaction protects SCRIB from proteasomal degradation and facilitates SCRIB localization to intermediate filaments, the interaction is reduced by cell contact inhibition. Post-translationally, ubiquitinated; targeted for UBE3A-dependent multiubiquitination and degraded. In terms of processing, palmitoylated. Could be depalmitoylated by LYPLA1 and/or LYPLA2. Palmitoylation of SCRIB by ZDHHC7 is required for its localization to cell-cell junctions, function in the establishement of epithelial cell polarity and the regulation of downstream signaling pathways important for epithelial cell differentiation.

The protein localises to the cell membrane. Its subcellular location is the cell junction. It is found in the adherens junction. It localises to the cell projection. The protein resides in the lamellipodium. The protein localises to the cytoplasm. Its subcellular location is the postsynapse. It is found in the presynapse. Functionally, scaffold protein involved in different aspects of polarized cell differentiation regulating epithelial and neuronal morphogenesis and T-cell polarization. Via its interaction with CRTAM, required for the late phase polarization of a subset of CD4+ T-cells, which in turn regulates TCR-mediated proliferation and IFNG and IL22 production. Plays a role in cell directional movement, cell orientation, cell sheet organization and Golgi complex polarization at the cell migration front. Promotes epithelial cell layer barrier function via maintaining cell-cell adhesion. Most probably functions in the establishment of apico-basal cell polarity. May function in cell proliferation regulating progression from G1 to S phase and as a positive regulator of apoptosis for instance during acinar morphogenesis of the mammary epithelium. May regulate cell invasion via MAPK-mediated cell migration and adhesion. May play a role in exocytosis and in the targeting of synaptic vesicles to synapses. Functions as an activator of Rac GTPase activity. The polypeptide is Protein scribble homolog (Canis lupus familiaris (Dog)).